Consider the following 367-residue polypeptide: Epoxide hydrolase 3 (367 aa).

The chain crosses the membrane as a helical span at residues 21–41 (GVFFWVLVYVAALLAAVSYIP). Asp-173 serves as the catalytic Nucleophile. Tyr-285 functions as the Proton donor in the catalytic mechanism. The Proton acceptor role is filled by His-340.

This sequence belongs to the AB hydrolase superfamily. Epoxide hydrolase family.

The protein resides in the microsome membrane. It carries out the reaction an epoxide + H2O = an ethanediol. The catalysed reaction is 9,10-epoxyoctadecanoate + H2O = 9,10-dihydroxyoctadecanoate. It catalyses the reaction 9,10-epoxy-(12Z)-octadecenoate + H2O = 9,10-dihydroxy-(12Z)-octadecenoate. The enzyme catalyses 8,9-epoxy-(5Z,11Z,14Z)-eicosatrienoate + H2O = 8,9-dihydroxy-(5Z,11Z,14Z)-eicosatrienoate. It carries out the reaction 11,12-epoxy-(5Z,8Z,14Z)-eicosatrienoate + H2O = 11,12-dihydroxy-(5Z,8Z,14Z)-eicosatrienoate. The catalysed reaction is 14,15-epoxy-(5Z,8Z,11Z)-eicosatrienoate + H2O = 14,15-dihydroxy-(5Z,8Z,11Z)-eicosatrienoate. Inhibited by 1-(1-acetylpiperidin-4-yl)-3-(4-(trifl uoromethoxy)phenyl)urea (TPAU), 1-cyclohexyl-3-dodecylurea (CDU), 12-(3-adamantan-1-yl-ureido)-dodecanoic acid (AUDA), 1-((3S, 5S, 7S)-adamantan-1-yl)-3-(5-(2-(2-ethoxyethoxy) ethoxy)pentyl)urea (AEPU) and to a lesser extent by 8-(3-((3S, 5S, 7S)-adamantan-1-yl)ureido) octanoic acid (AUOA). Functionally, catalyzes the hydrolysis of epoxide-containing fatty acids. Active in vitro against epoxyeicosatrienoic acids (EETs) including 8,9-EET, 9,10-EET, 11,12-EET and 14,15-EET and leukotoxin. The polypeptide is Epoxide hydrolase 3 (ephx3) (Xenopus tropicalis (Western clawed frog)).